The sequence spans 138 residues: Dehydratase iacD (138 aa).

An EthD domain is found at 18-113; that stretch reads GVSEEDFIEW…LKDQDVWMDN (96 aa).

It belongs to the tpcK family.

It participates in secondary metabolite biosynthesis. Functionally, dehydratase; part of the gene cluster that mediates the biosynthesis of iso-A82775C, a enylepoxycyclohexane and biosynthetic precursor of the chloropestolide anticancer natural products. Within the cluster, the prenyltransferase iacE prenylates siccayne to generate pestalodiol E, using dimethylallyl diphosphate (DMAPP) as cosubstrate. The probable oxidoreductase iacF is then involved in the epoxidation of pestalodiol F to pestalodiol F, which is further converted to pestalofone A by the short-chain dehydrogenase/reductase iacG. Iso-A82775C is subsequently generated from pestalofone A by the short-chain dehydrogenase/reductase iacC. Iso-A82775C is further condensed with maldoxin via a Diels-Alder reaction to produce the anticancer natural products chloropestolides A to E. This chain is Dehydratase iacD, found in Pestalotiopsis fici (strain W106-1 / CGMCC3.15140).